Consider the following 103-residue polypeptide: Putative membrane protein insertion efficiency factor (103 aa).

This sequence belongs to the UPF0161 family.

The protein localises to the cell inner membrane. Could be involved in insertion of integral membrane proteins into the membrane. The sequence is that of Putative membrane protein insertion efficiency factor from Chlamydia pneumoniae (Chlamydophila pneumoniae).